The sequence spans 254 residues: Zinc import ATP-binding protein ZnuC (254 aa).

In terms of domain architecture, ABC transporter spans 5 to 221; sequence ICAADLSVSH…PAYRALFGSE (217 aa). An ATP-binding site is contributed by 38-45; sequence GPNGSGKS. Residues 234–245 are compositionally biased toward basic and acidic residues; that stretch reads DHDHDHVAEGHR. A disordered region spans residues 234 to 254; the sequence is DHDHDHVAEGHRHGPACAHPH.

The protein belongs to the ABC transporter superfamily. Zinc importer (TC 3.A.1.15.5) family. As to quaternary structure, the complex is composed of two ATP-binding proteins (ZnuC), two transmembrane proteins (ZnuB) and a solute-binding protein (ZnuA).

The protein resides in the cell inner membrane. The enzyme catalyses Zn(2+)(out) + ATP(in) + H2O(in) = Zn(2+)(in) + ADP(in) + phosphate(in) + H(+)(in). In terms of biological role, part of the ABC transporter complex ZnuABC involved in zinc import. Responsible for energy coupling to the transport system. This is Zinc import ATP-binding protein ZnuC from Paracoccus denitrificans (strain Pd 1222).